A 352-amino-acid chain; its full sequence is Photosystem II D2 protein (352 aa).

Residues 40-60 form a helical membrane-spanning segment; the sequence is CAYLALGGWLTGTTFVTSWYT. Chlorophyll a is bound at residue H117. The chain crosses the membrane as a helical span at residues 124–140; the sequence is GFMLRQFEIAQSVRLRP. Positions 129 and 142 each coordinate pheophytin a. A helical membrane pass occupies residues 152 to 165; the sequence is VFVSVFLIYPLGQS. H197 serves as a coordination point for chlorophyll a. A helical membrane pass occupies residues 207–227; it reads AALLCAIHGATVENTLFEDGD. Positions 214 and 261 each coordinate a plastoquinone. H214 serves as a coordination point for Fe cation. A Fe cation-binding site is contributed by H268. A helical transmembrane segment spans residues 278–294; the sequence is GLWMSALGVVGLALNLR.

It belongs to the reaction center PufL/M/PsbA/D family. As to quaternary structure, PSII is composed of 1 copy each of membrane proteins PsbA, PsbB, PsbC, PsbD, PsbE, PsbF, PsbH, PsbI, PsbJ, PsbK, PsbL, PsbM, PsbT, PsbY, PsbZ, Psb30/Ycf12, at least 3 peripheral proteins of the oxygen-evolving complex and a large number of cofactors. It forms dimeric complexes. The cofactor is The D1/D2 heterodimer binds P680, chlorophylls that are the primary electron donor of PSII, and subsequent electron acceptors. It shares a non-heme iron and each subunit binds pheophytin, quinone, additional chlorophylls, carotenoids and lipids. There is also a Cl(-1) ion associated with D1 and D2, which is required for oxygen evolution. The PSII complex binds additional chlorophylls, carotenoids and specific lipids..

The protein resides in the plastid. It is found in the chloroplast thylakoid membrane. The enzyme catalyses 2 a plastoquinone + 4 hnu + 2 H2O = 2 a plastoquinol + O2. Functionally, photosystem II (PSII) is a light-driven water:plastoquinone oxidoreductase that uses light energy to abstract electrons from H(2)O, generating O(2) and a proton gradient subsequently used for ATP formation. It consists of a core antenna complex that captures photons, and an electron transfer chain that converts photonic excitation into a charge separation. The D1/D2 (PsbA/PsbD) reaction center heterodimer binds P680, the primary electron donor of PSII as well as several subsequent electron acceptors. D2 is needed for assembly of a stable PSII complex. The chain is Photosystem II D2 protein from Bigelowiella natans (Pedinomonas minutissima).